Here is a 133-residue protein sequence, read N- to C-terminus: Small heat shock protein ibp (133 aa).

Positions 11-126 (EQPLSENPNY…KPKKISINEE (116 aa)) constitute a sHSP domain.

It belongs to the small heat shock protein (HSP20) family.

The polypeptide is Small heat shock protein ibp (ibp) (Wigglesworthia glossinidia brevipalpis).